The primary structure comprises 338 residues: Tetraacyldisaccharide 4'-kinase (338 aa).

51-58 (HLGGAGKT) is an ATP binding site.

The protein belongs to the LpxK family.

The enzyme catalyses a lipid A disaccharide + ATP = a lipid IVA + ADP + H(+). Its pathway is glycolipid biosynthesis; lipid IV(A) biosynthesis; lipid IV(A) from (3R)-3-hydroxytetradecanoyl-[acyl-carrier-protein] and UDP-N-acetyl-alpha-D-glucosamine: step 6/6. Its function is as follows. Transfers the gamma-phosphate of ATP to the 4'-position of a tetraacyldisaccharide 1-phosphate intermediate (termed DS-1-P) to form tetraacyldisaccharide 1,4'-bis-phosphate (lipid IVA). This Rhodopseudomonas palustris (strain BisB5) protein is Tetraacyldisaccharide 4'-kinase.